We begin with the raw amino-acid sequence, 106 residues long: Small ribosomal subunit protein uS10 (106 aa).

Belongs to the universal ribosomal protein uS10 family. Part of the 30S ribosomal subunit.

Involved in the binding of tRNA to the ribosomes. The chain is Small ribosomal subunit protein uS10 from Mycoplasma genitalium (strain ATCC 33530 / DSM 19775 / NCTC 10195 / G37) (Mycoplasmoides genitalium).